A 493-amino-acid polypeptide reads, in one-letter code: Cysteine--tRNA ligase (493 aa).

Cys-29 contributes to the Zn(2+) binding site. The 'HIGH' region motif lies at 31–41; it reads VTVYDYCHIGH. Positions 209, 234, and 238 each coordinate Zn(2+). Positions 266–270 match the 'KMSKS' region motif; sequence KMSKS. An ATP-binding site is contributed by Lys-269.

Belongs to the class-I aminoacyl-tRNA synthetase family. As to quaternary structure, monomer. The cofactor is Zn(2+).

It is found in the cytoplasm. It catalyses the reaction tRNA(Cys) + L-cysteine + ATP = L-cysteinyl-tRNA(Cys) + AMP + diphosphate. The sequence is that of Cysteine--tRNA ligase from Pelobacter propionicus (strain DSM 2379 / NBRC 103807 / OttBd1).